Consider the following 209-residue polypeptide: CASP-like protein 1B1 (209 aa).

Residues 1–10 (MDLERGDKKP) show a composition bias toward basic and acidic residues. Positions 1 to 39 (MDLERGDKKPPPPPPPAPRTAAATTTTTTTPACSGKKRP) are disordered. Topologically, residues 1-49 (MDLERGDKKPPPPPPPAPRTAAATTTTTTTPACSGKKRPPLRDSLVALQ) are cytoplasmic. Residues 19 to 32 (RTAAATTTTTTTPA) show a composition bias toward low complexity. A helical transmembrane segment spans residues 50–70 (PVLLRAAAALAAAAAAAVMAL). At 71 to 100 (DAQSYTAVVAIVGTRPLTQTFTAKFSDTPA) the chain is on the extracellular side. The helical transmembrane segment at 101-121 (FVYFVIANAIAAAYNLLVLLV) threads the bilayer. The Cytoplasmic segment spans residues 122 to 134 (RRRRRTTAGLVVR). Residues 135–155 (MLDMVVMALLATGAAAAASMA) form a helical membrane-spanning segment. Topologically, residues 156–180 (ELGRNGNARARWNPVCDRFGSFCRR) are extracellular. Residues 181-201 (GGAALAASFVGVALMLALNLL) form a helical membrane-spanning segment. At 202 to 209 (SAASGAGC) the chain is on the cytoplasmic side.

The protein belongs to the Casparian strip membrane proteins (CASP) family. Homodimer and heterodimers.

It localises to the cell membrane. This is CASP-like protein 1B1 from Zea mays (Maize).